We begin with the raw amino-acid sequence, 428 residues long: Dihydroorotase (428 aa).

Histidine 59 and histidine 61 together coordinate Zn(2+). Substrate is bound by residues 61–63 and asparagine 93; that span reads HLR. The Zn(2+) site is built by aspartate 151, histidine 178, and histidine 231. Position 277 (asparagine 277) interacts with substrate. A Zn(2+)-binding site is contributed by aspartate 304. Residue aspartate 304 is part of the active site. Substrate is bound by residues histidine 308 and 322–323; that span reads FG.

It belongs to the metallo-dependent hydrolases superfamily. DHOase family. Class I DHOase subfamily. Requires Zn(2+) as cofactor.

It carries out the reaction (S)-dihydroorotate + H2O = N-carbamoyl-L-aspartate + H(+). The protein operates within pyrimidine metabolism; UMP biosynthesis via de novo pathway; (S)-dihydroorotate from bicarbonate: step 3/3. In terms of biological role, catalyzes the reversible cyclization of carbamoyl aspartate to dihydroorotate. The chain is Dihydroorotase from Bacillus cytotoxicus (strain DSM 22905 / CIP 110041 / 391-98 / NVH 391-98).